We begin with the raw amino-acid sequence, 371 residues long: Histidinol-phosphate aminotransferase (371 aa).

K232 bears the N6-(pyridoxal phosphate)lysine mark.

This sequence belongs to the class-II pyridoxal-phosphate-dependent aminotransferase family. Histidinol-phosphate aminotransferase subfamily. As to quaternary structure, homodimer. It depends on pyridoxal 5'-phosphate as a cofactor.

It catalyses the reaction L-histidinol phosphate + 2-oxoglutarate = 3-(imidazol-4-yl)-2-oxopropyl phosphate + L-glutamate. It functions in the pathway amino-acid biosynthesis; L-histidine biosynthesis; L-histidine from 5-phospho-alpha-D-ribose 1-diphosphate: step 7/9. This is Histidinol-phosphate aminotransferase from Methylibium petroleiphilum (strain ATCC BAA-1232 / LMG 22953 / PM1).